We begin with the raw amino-acid sequence, 558 residues long: Transcription termination factor MTEF18, mitochondrial (558 aa).

Residues 1-58 (MFMVRLKFASISHNFSTVAAKHRRVPSKYKSLAIGKAQQAITDYLHTTRSLSYTHAEQ) constitute a mitochondrion transit peptide.

This sequence belongs to the mTERF family.

The protein localises to the mitochondrion. Functionally, transcription termination factor involved in the regulation of mitochondrial-encoded gene expression. Essential for normal plant growth and development. The chain is Transcription termination factor MTEF18, mitochondrial from Arabidopsis thaliana (Mouse-ear cress).